A 217-amino-acid chain; its full sequence is tRNA (guanine-N(7)-)-methyltransferase (217 aa).

S-adenosyl-L-methionine contacts are provided by Glu56, Glu81, Asp108, and Asp130. Residue Asp130 is part of the active site. 2 residues coordinate substrate: Lys134 and Asp166.

Belongs to the class I-like SAM-binding methyltransferase superfamily. TrmB family.

It carries out the reaction guanosine(46) in tRNA + S-adenosyl-L-methionine = N(7)-methylguanosine(46) in tRNA + S-adenosyl-L-homocysteine. It participates in tRNA modification; N(7)-methylguanine-tRNA biosynthesis. Catalyzes the formation of N(7)-methylguanine at position 46 (m7G46) in tRNA. This Neorickettsia sennetsu (strain ATCC VR-367 / Miyayama) (Ehrlichia sennetsu) protein is tRNA (guanine-N(7)-)-methyltransferase.